The sequence spans 183 residues: Large ribosomal subunit protein bL32m (183 aa).

Cys-99, Cys-102, Cys-112, and Cys-115 together coordinate Zn(2+).

Belongs to the bacterial ribosomal protein bL32 family. As to quaternary structure, component of the mitochondrial large ribosomal subunit (mt-LSU).

It localises to the mitochondrion. Functionally, component of the mitochondrial large ribosomal subunit (mt-LSU). The mitochondrial ribosome (mitoribosome) is a large ribonucleoprotein complex responsible for the synthesis of proteins inside mitochondria. The sequence is that of Large ribosomal subunit protein bL32m (mrpl-32) from Caenorhabditis elegans.